Consider the following 794-residue polypeptide: MADNYVIWFENLRMTDVERVGGKNASLGEMISQLTEKGVRVPGGFATTAEAYRAFLAHNGLSERISAALAKLDVEDVAELARVGKEIRQWILDTPFPEQLDAEIEAAWNKMVADAGGADISVAVRSSATAEDLPDASFAGQQETFLNINGLDNVKEAMHHVFASLYNDRAISYRVHKGFEHDIVALSAGVQRMVRSDSGASGVMFTLDTESGYDQVVFVTSSYGLGENVVQGAVNPDEFYVFKPTLKAGKPAILRKTMGSKHIKMIFTDKAEAGKSVTNVDVPEEDRNRFSITDEEITELAHYALTIEKHYGRPMDIEWGRDGLDGKLYILQARPETVKSQEEGNRNLRRFAINGDKTVLCEGRAIGQKVGQGKVRLIKDASEMDSVEAGDVLVTDMTDPDWEPVMKRASAIVTNRGGRTCHAAIIARELGIPAVVGCGNATELLKNGQEVTVSCAEGDTGFIYAGLLDVQITDVALDNMPKAPVKVMMNVGNPELAFSFANLPSEGIGLARMEFIINRQIGIHPKALLEFDKQDDELKAEITRRIAGYASPVDFYVDKIAEGVATLAASVYPRKTIVRMSDFKSNEYANLVGGNVYEPHEENPMLGFRGAARYVADNFKDCFALECKALKRVRDEMGLTNVEIMIPFVRTLGEAEAVVKALKENGLERGKNGLRLIMMCELPSNAVLAEQFLQYFDGFSIGSNDMTQLTLGLDRDSGLVSESFDERNPAVKVMLHLAISACRKQNKYVGICGQGPSDHPDFAKWLVEEGIESVSLNPDTVIETWLYLANELNK.

H422 (tele-phosphohistidine intermediate) is an active-site residue. The substrate site is built by R512, R579, E681, G702, S703, N704, and D705. A Mg(2+)-binding site is contributed by E681. D705 contributes to the Mg(2+) binding site. C752 (proton donor) is an active-site residue.

This sequence belongs to the PEP-utilizing enzyme family. Mg(2+) is required as a cofactor.

It catalyses the reaction pyruvate + ATP + H2O = phosphoenolpyruvate + AMP + phosphate + 2 H(+). It participates in carbohydrate biosynthesis; gluconeogenesis. Functionally, catalyzes the phosphorylation of pyruvate to phosphoenolpyruvate. This is Phosphoenolpyruvate synthase (ppsA) from Neisseria meningitidis serogroup B (strain ATCC BAA-335 / MC58).